Reading from the N-terminus, the 768-residue chain is DNA ligase 1 (768 aa).

Positions 42–139 (VEVSQSSSDS…KEPPLESNAR (98 aa)) are disordered. The segment covering 52–99 (KNVDGRSTSEKRKVESVKLVDESKHNNHDDTGTQNVERENNIVSEAKK) has biased composition (basic and acidic residues). The segment covering 104–124 (GSSSSSSDAVSSNNDSGASTP) has biased composition (low complexity). Positions 309–318 (KLRLQLAEKT) are interaction with target DNA. Glu-414 contributes to the ATP binding site. Lys-416 acts as the N6-AMP-lysine intermediate in catalysis. Positions 421 and 437 each coordinate ATP. Glu-469 is a Mg(2+) binding site. Positions 490-492 (KRK) are interaction with target DNA. Glu-568 is a Mg(2+) binding site. 3 residues coordinate ATP: Lys-573, Arg-587, and Lys-593.

This sequence belongs to the ATP-dependent DNA ligase family. It depends on Mg(2+) as a cofactor.

It localises to the nucleus. The enzyme catalyses ATP + (deoxyribonucleotide)n-3'-hydroxyl + 5'-phospho-(deoxyribonucleotide)m = (deoxyribonucleotide)n+m + AMP + diphosphate.. Functionally, DNA ligase that seals nicks in double-stranded DNA during DNA replication, DNA recombination and DNA repair. The chain is DNA ligase 1 (cdc17) from Schizosaccharomyces pombe (strain 972 / ATCC 24843) (Fission yeast).